Reading from the N-terminus, the 417-residue chain is Phosphatidylcholine:ceramide cholinephosphotransferase 1 (417 aa).

Residues 11–74 form the SAM domain; that stretch reads WSPEEVTNWL…LHMIETLKMA (64 aa). A run of 5 helical transmembrane segments spans residues 140–160, 188–208, 219–239, 280–300, and 308–328; these read FLAF…ISVV, FSIC…QWLL, FFCI…VTTL, MCGD…YLFI, and LWWY…CILL. The active site involves H289. The Cytoplasmic portion of the chain corresponds to 329-417; that stretch reads AHDHYTVDVV…VKYSRLVNDT (89 aa). Active-site residues include H332 and D336.

It belongs to the sphingomyelin synthase family.

It is found in the golgi apparatus membrane. It carries out the reaction an N-acylsphing-4-enine + a 1,2-diacyl-sn-glycero-3-phosphocholine = a sphingomyelin + a 1,2-diacyl-sn-glycerol. It catalyses the reaction an N-acylsphing-4-enine + a 1,2-diacyl-sn-glycero-3-phosphoethanolamine = an N-acylsphing-4-enine 1-phosphoethanolamine + a 1,2-diacyl-sn-glycerol. Functionally, major sphingomyelin synthase at the Golgi apparatus. Catalyzes the reversible transfer of phosphocholine moiety in sphingomyelin biosynthesis: in the forward reaction transfers phosphocholine head group of phosphatidylcholine (PC) on to ceramide (CER) to form ceramide phosphocholine (sphingomyelin, SM) and diacylglycerol (DAG) as by-product, and in the reverse reaction transfers phosphocholine from SM to DAG to form PC and CER. The direction of the reaction depends on the levels of CER and DAG in Golgi membranes. Converts the newly synthesized CER, that is transported from the endoplasmic reticulum to the trans-Golgi by the Cer transport protein (CERT), to SM. Can form a heteromeric complex with glucosylceramide synthase (GCS) increasing SMS activity and reducing glucosylceramide synthesis, a critical mechanism that controls the metabolic fate of CER in the Golgi. Does not use free phosphorylcholine or CDP-choline as donor. Can also transfer phosphoethanolamine head group of phosphatidylethanolamine (PE) on to CER to form ceramide phosphoethanolamine (CPE). Regulates receptor-mediated signal transduction via mitogenic DAG and proapoptotic CER, as well as via SM, a structural component of membrane rafts that serve as platforms for signal transduction and protein sorting. Plays a role in secretory transport via regulation of DAG pool at the Golgi apparatus and its downstream effects on PRKD1. This chain is Phosphatidylcholine:ceramide cholinephosphotransferase 1 (SGMS1), found in Gallus gallus (Chicken).